A 237-amino-acid polypeptide reads, in one-letter code: Phosphoribosylaminoimidazole-succinocarboxamide synthase (237 aa).

This sequence belongs to the SAICAR synthetase family.

It carries out the reaction 5-amino-1-(5-phospho-D-ribosyl)imidazole-4-carboxylate + L-aspartate + ATP = (2S)-2-[5-amino-1-(5-phospho-beta-D-ribosyl)imidazole-4-carboxamido]succinate + ADP + phosphate + 2 H(+). Its pathway is purine metabolism; IMP biosynthesis via de novo pathway; 5-amino-1-(5-phospho-D-ribosyl)imidazole-4-carboxamide from 5-amino-1-(5-phospho-D-ribosyl)imidazole-4-carboxylate: step 1/2. The chain is Phosphoribosylaminoimidazole-succinocarboxamide synthase from Halalkalibacterium halodurans (strain ATCC BAA-125 / DSM 18197 / FERM 7344 / JCM 9153 / C-125) (Bacillus halodurans).